Here is a 1372-residue protein sequence, read N- to C-terminus: DNA-directed RNA polymerase subunit beta (1372 aa).

The protein belongs to the RNA polymerase beta chain family. The RNAP catalytic core consists of 2 alpha, 1 beta, 1 beta' and 1 omega subunit. When a sigma factor is associated with the core the holoenzyme is formed, which can initiate transcription.

The enzyme catalyses RNA(n) + a ribonucleoside 5'-triphosphate = RNA(n+1) + diphosphate. In terms of biological role, DNA-dependent RNA polymerase catalyzes the transcription of DNA into RNA using the four ribonucleoside triphosphates as substrates. This is DNA-directed RNA polymerase subunit beta from Nitratidesulfovibrio vulgaris (strain ATCC 29579 / DSM 644 / CCUG 34227 / NCIMB 8303 / VKM B-1760 / Hildenborough) (Desulfovibrio vulgaris).